A 439-amino-acid chain; its full sequence is DNA 3'-5' translocase XPB2 (439 aa).

The interval 1 to 54 (MVYLRYFKGLILSDAYAPGLKWSDELKAYSALAFKYRDVRKYFLEKEIEVEENV) is DRD domain. Residues 77 to 221 (VKAWLKEKRG…LYPILVGPIV (145 aa)) enclose the Helicase ATP-binding domain. Residues 90–97 (LPTGAGKT) and Arg127 each bind ATP. Positions 174-177 (DEVH) match the DEAH box motif. An RED motif motif is present at residues 205–207 (RDD). A flexible hinge region region spans residues 227–234 (EELAGKYI). The interval 248–307 (NEEKKRYDGLRKKLKDFLSSRGLKLQNLDDFHRLVKLAAKDKEAREALLAWHESLNIAVN) is thM region. Residues 311–439 (KIEKLREILQ…DYRLSRRRRE (129 aa)) form the Helicase C-terminal domain.

Belongs to the helicase family. RAD25/XPB subfamily. In terms of assembly, forms a heterodimer with Bax1.

It carries out the reaction Couples ATP hydrolysis with the unwinding of duplex DNA by translocating in the 3'-5' direction.. It catalyses the reaction ATP + H2O = ADP + phosphate + H(+). Its function is as follows. ATP-dependent DNA translocase which moves along double-stranded DNA (dsDNA) in a 3'-5' direction, unwinding the DNA. The ThM domain grips the resulting 3'-ssDNA tail and functions as a wedge (particularly Phe-278), breaking dsDNA base pairs, probably using the energy from ATP hydrolysis to move along dsDNA. A DNA-dependent ATPase; double-stranded DNA (dsDNA) stimulates the activity more than single-stranded DNA (ssDNA), while Bax1 stimulates ATPase more. In an in vitro assay had no detectable helicase activity. Binds ssDNA better than dsDNA. Has very low ATPase activity that is stimulated by Bax1; dsDNA, Y-form DNA and a DNA substrate with a 6 base pair (bp) bubble in the center stimulate the XPB2-Bax1 ATPase activity about 10- 20-fold more than the absence of DNA. In an XPB2-Bax1-bubble DNA crystal (12 bp of dsDNA, a 6 base bubble and 6 bp of dsDNA) the short 6 bp arm is unwound. The 2 helicase and the ThM domains of XPB2 with the NTD and CRD domains of Bax1 encircle the DNA, forming a tunnel where the 12 bp dsDNA and the ds-ssDNA junction are located. The ThM domain is wedged between the ssDNA tails, with the 5' ssDNA contacting Bax1 and the 3' ssDNA in a channel in XPB2. Bax1 increases the affinity of XPB2 for forked DNA. This chain is DNA 3'-5' translocase XPB2, found in Sulfurisphaera tokodaii (strain DSM 16993 / JCM 10545 / NBRC 100140 / 7) (Sulfolobus tokodaii).